Consider the following 60-residue polypeptide: Cytotoxin 1 (60 aa).

Intrachain disulfides connect C3-C21, C14-C38, C42-C53, and C54-C59.

Belongs to the three-finger toxin family. Short-chain subfamily. Type IA cytotoxin sub-subfamily. Monomer in solution; Homodimer and oligomer in the presence of negatively charged lipids forming a pore with a size ranging between 20 and 30 Angstroms. In terms of tissue distribution, expressed by the venom gland.

It is found in the secreted. The protein resides in the target cell membrane. Its function is as follows. Produces complete blockade of auricular contraction, which is irreversible at high concentrations. Induces apoptosis in leukemic cells. Possesses anti-arthritic and anti-inflammatory potential. The polypeptide is Cytotoxin 1 (Naja kaouthia (Monocled cobra)).